A 545-amino-acid chain; its full sequence is ATP synthase subunit alpha (545 aa).

173–180 (GDRQTGKT) contacts ATP.

The protein belongs to the ATPase alpha/beta chains family. F-type ATPases have 2 components, CF(1) - the catalytic core - and CF(0) - the membrane proton channel. CF(1) has five subunits: alpha(3), beta(3), gamma(1), delta(1), epsilon(1). CF(0) has three main subunits: a(1), b(2) and c(9-12). The alpha and beta chains form an alternating ring which encloses part of the gamma chain. CF(1) is attached to CF(0) by a central stalk formed by the gamma and epsilon chains, while a peripheral stalk is formed by the delta and b chains.

It is found in the cell membrane. The enzyme catalyses ATP + H2O + 4 H(+)(in) = ADP + phosphate + 5 H(+)(out). Produces ATP from ADP in the presence of a proton gradient across the membrane. The alpha chain is a regulatory subunit. The sequence is that of ATP synthase subunit alpha from Leifsonia xyli subsp. xyli (strain CTCB07).